The sequence spans 61 residues: Insect toxin AaHIT5 (61 aa).

The region spanning 1–61 is the LCN-type CS-alpha/beta domain; the sequence is DGYIKRHDGC…AWKSETNTCD (61 aa). Disulfide bonds link cysteine 10-cysteine 60, cysteine 14-cysteine 35, cysteine 21-cysteine 42, and cysteine 25-cysteine 44.

In terms of tissue distribution, expressed by the venom gland.

The protein resides in the secreted. Excitatory insect toxins induce a spastic paralysis. They bind voltage-independently to sodium channels (Nav) and shift the voltage of activation toward more negative potentials thereby affecting sodium channel activation and promoting spontaneous and repetitive firing. This toxin elicits excitatory activity with no flaccid paralysis despite its high degree of sequence similarity with other depressant insect toxins. This toxin is active only on insects. This chain is Insect toxin AaHIT5, found in Androctonus australis (Sahara scorpion).